Here is a 280-residue protein sequence, read N- to C-terminus: Cytochrome bc1 complex cytochrome c subunit (280 aa).

A helical membrane pass occupies residues 25–45 (LSGGVLLLIALTIAGGLAAVL). 2 consecutive Cytochrome c domains span residues 60–140 (ALLR…QANG) and 161–239 (NDLG…KVAT). Residues C73, C76, H77, C174, C177, and H178 each coordinate heme c. The helical transmembrane segment at 258–278 (GMAMWIIGMVAAIGLALWIGA) threads the bilayer.

The cytochrome bc1 complex is composed of a cytochrome b (QcrB), the Rieske iron-sulfur protein (QcrA) and a diheme cytochrome c (QcrC) subunit. In terms of processing, binds 2 heme c groups covalently per subunit.

The protein localises to the cell membrane. The catalysed reaction is a quinol + 2 Fe(III)-[cytochrome c](out) = a quinone + 2 Fe(II)-[cytochrome c](out) + 2 H(+)(out). In terms of biological role, cytochrome b subunit of the cytochrome bc1 complex, an essential component of the respiratory electron transport chain required for ATP synthesis. The bc1 complex catalyzes the oxidation of ubiquinol and the reduction of cytochrome c in the respiratory chain. The bc1 complex operates through a Q-cycle mechanism that couples electron transfer to generation of the proton gradient that drives ATP synthesis. The polypeptide is Cytochrome bc1 complex cytochrome c subunit (qcrC) (Mycobacterium bovis (strain ATCC BAA-935 / AF2122/97)).